Here is an 859-residue protein sequence, read N- to C-terminus: Pre-mRNA-splicing factor SYF1 (859 aa).

HAT repeat units follow at residues Asn17 to Glu49, Arg52 to Thr84, Val88 to Cys108, Tyr123 to Glu157, Asp177 to Leu219, Arg238 to Asn271, Val427 to Arg459, Asn461 to Glu482, Ile520 to Ala554, Tyr599 to Ser633, Leu639 to Arg675, Glu685 to Ser718, Leu720 to Ser754, and Gly756 to Lys790.

The protein belongs to the crooked-neck family. As to quaternary structure, belongs to the NTC complex (or PRP19-associated complex), composed of at least CEF1, CLF1, ISY1, NTC20, SNT309, SYF1, SYF2, and PRP19. The NTC complex associates with the spliceosome after the release of the U1 and U4 snRNAs and forms the CWC spliceosome subcomplex (or CEF1-associated complex) reminiscent of a late-stage spliceosome composed also of the U2, U5 and U6 snRNAs and at least BUD13, BUD31, BRR2, CDC40, CUS1, CWC2, CWC15, CWC21, CWC22, CWC23, CWC24, CWC25, CWC27, ECM2, HSH155, IST3, LEA1, MSL1, PRP8, PRP9, PRP11, PRP21, PRP22, PRP45, PRP46, SLU7, SMB1, SMD1, SMD2, SMD3, SMX2, SMX3, SNU114, SPP2, RSE1 and YJU2. Interacts with CEF1, CLF1, ISY1, NTC20, PRP22, PRP46 and SYF2.

The protein resides in the nucleus. Its function is as follows. Involved in pre-mRNA splicing and cell cycle control. As a component of the NTC complex (or PRP19-associated complex), associates to the spliceosome to mediate conformational rearrangement or to stabilize the structure of the spliceosome after U4 snRNA dissociation, which leads to spliceosome maturation. In Saccharomyces cerevisiae (strain ATCC 204508 / S288c) (Baker's yeast), this protein is Pre-mRNA-splicing factor SYF1 (SYF1).